Reading from the N-terminus, the 261-residue chain is Lytic polysaccharide monooxygenase-like protein X325 (261 aa).

A signal peptide spans 1–17 (MQLSALALATLLATANA). The Cu(2+) site is built by His-18, His-64, and Asp-133. 2 cysteine pairs are disulfide-bonded: Cys-39/Cys-139 and Cys-108/Cys-155. 2 N-linked (GlcNAc...) asparagine glycosylation sites follow: Asn-157 and Asn-183. Residues 174–210 (LAENTQGSGNSSGHAHGSSGSGSASASKTDSKSSAAS) form a disordered region. Residues 180–210 (GSGNSSGHAHGSSGSGSASASKTDSKSSAAS) are compositionally biased toward low complexity. The GPI-anchor amidated asparagine moiety is linked to residue Asn-238. Positions 239-261 (SGSLAYVNGALAIGGVVAAALLI) are cleaved as a propeptide — removed in mature form.

This sequence belongs to the X325 family. It depends on Cu(2+) as a cofactor.

It is found in the cell membrane. Functionally, lytic polysaccharide monooxygenase-like protein that has diverged to biological functions other than polysaccharide degradation since it does not perform oxidative cleavage of polysaccharides. Acts as a cell surface-bound protein that functions in the copper-accumulation pathway. This Yarrowia lipolytica (strain CLIB 122 / E 150) (Yeast) protein is Lytic polysaccharide monooxygenase-like protein X325.